A 460-amino-acid chain; its full sequence is Cyclin-T1-2 (460 aa).

2 disordered regions span residues Met-1–Ala-20 and Gln-285–Ser-345. Residues Ser-314 to Arg-324 show a composition bias toward basic and acidic residues. A compositionally biased stretch (polar residues) spans Asn-332–Ser-345.

The protein belongs to the cyclin family. Cyclin T subfamily.

The polypeptide is Cyclin-T1-2 (CYCT1-2) (Arabidopsis thaliana (Mouse-ear cress)).